A 244-amino-acid polypeptide reads, in one-letter code: Glucosamine-6-phosphate deaminase (244 aa).

The Proton acceptor; for enolization step role is filled by D67. N136 serves as the catalytic For ring-opening step. H138 (proton acceptor; for ring-opening step) is an active-site residue. Residue E143 is the For ring-opening step of the active site.

This sequence belongs to the glucosamine/galactosamine-6-phosphate isomerase family. NagB subfamily.

It carries out the reaction alpha-D-glucosamine 6-phosphate + H2O = beta-D-fructose 6-phosphate + NH4(+). Its pathway is amino-sugar metabolism; N-acetylneuraminate degradation; D-fructose 6-phosphate from N-acetylneuraminate: step 5/5. Functionally, catalyzes the reversible isomerization-deamination of glucosamine 6-phosphate (GlcN6P) to form fructose 6-phosphate (Fru6P) and ammonium ion. In Clostridium botulinum (strain ATCC 19397 / Type A), this protein is Glucosamine-6-phosphate deaminase.